We begin with the raw amino-acid sequence, 192 residues long: uncharacterized protein (192 aa).

The Nudix hydrolase domain maps to 29-160 (QRQAAVLIPV…PLDVYRRGNS (132 aa)). A Nudix box motif is present at residues 67 to 89 (GAVDSTDASLIAAALREAQEEVA). Mg(2+) contacts are provided by Glu-83 and Glu-87.

It belongs to the Nudix hydrolase family. PCD1 subfamily. It depends on Mn(2+) as a cofactor. The cofactor is Mg(2+).

Functionally, probably mediates the hydrolysis of some nucleoside diphosphate derivatives. This is an uncharacterized protein from Salmonella agona (strain SL483).